The chain runs to 546 residues: Chaperonin GroEL 2 (546 aa).

Residues 30–33, K51, 87–91, G415, 479–481, and D495 contribute to the ATP site; these read TLGP, DGTTT, and NAA. The segment at 526–546 is disordered; it reads KEDAPMPGGMPGGMGGMGMDM. Residues 534 to 546 show a composition bias toward gly residues; that stretch reads GMPGGMGGMGMDM.

It belongs to the chaperonin (HSP60) family. Forms a cylinder of 14 subunits composed of two heptameric rings stacked back-to-back. Interacts with the co-chaperonin GroES.

The protein resides in the cytoplasm. The catalysed reaction is ATP + H2O + a folded polypeptide = ADP + phosphate + an unfolded polypeptide.. Together with its co-chaperonin GroES, plays an essential role in assisting protein folding. The GroEL-GroES system forms a nano-cage that allows encapsulation of the non-native substrate proteins and provides a physical environment optimized to promote and accelerate protein folding. The sequence is that of Chaperonin GroEL 2 from Burkholderia lata (strain ATCC 17760 / DSM 23089 / LMG 22485 / NCIMB 9086 / R18194 / 383).